A 105-amino-acid chain; its full sequence is MKLVFIFATAAIMGVVVYGQGRDAGDRGKRSLSDDFISTLQELKEAMDDLPSIYAIINKHGVNICEPCSRLCDNVADTHVVCKRCRRCIGRGGIHGAVAFGMRDE.

The N-terminal stretch at 1 to 19 (MKLVFIFATAAIMGVVVYG) is a signal peptide.

This is an uncharacterized protein from Magallana gigas (Pacific oyster).